The sequence spans 250 residues: 2,3-bisphosphoglycerate-dependent phosphoglycerate mutase (250 aa).

Substrate contacts are provided by residues 10–17 (RHGESQWN), 23–24 (TG), Arg62, 89–92 (ERHY), Lys100, 116–117 (RR), and 185–186 (GN). The active-site Tele-phosphohistidine intermediate is the His11. Residue Glu89 is the Proton donor/acceptor of the active site.

The protein belongs to the phosphoglycerate mutase family. BPG-dependent PGAM subfamily. In terms of assembly, homodimer.

It catalyses the reaction (2R)-2-phosphoglycerate = (2R)-3-phosphoglycerate. It participates in carbohydrate degradation; glycolysis; pyruvate from D-glyceraldehyde 3-phosphate: step 3/5. Catalyzes the interconversion of 2-phosphoglycerate and 3-phosphoglycerate. The sequence is that of 2,3-bisphosphoglycerate-dependent phosphoglycerate mutase from Pectobacterium carotovorum subsp. carotovorum (strain PC1).